A 360-amino-acid chain; its full sequence is UDP-3-O-acylglucosamine N-acyltransferase (360 aa).

The active-site Proton acceptor is the histidine 253.

Belongs to the transferase hexapeptide repeat family. LpxD subfamily. As to quaternary structure, homotrimer.

The enzyme catalyses a UDP-3-O-[(3R)-3-hydroxyacyl]-alpha-D-glucosamine + a (3R)-hydroxyacyl-[ACP] = a UDP-2-N,3-O-bis[(3R)-3-hydroxyacyl]-alpha-D-glucosamine + holo-[ACP] + H(+). It participates in bacterial outer membrane biogenesis; LPS lipid A biosynthesis. Functionally, catalyzes the N-acylation of UDP-3-O-acylglucosamine using 3-hydroxyacyl-ACP as the acyl donor. Is involved in the biosynthesis of lipid A, a phosphorylated glycolipid that anchors the lipopolysaccharide to the outer membrane of the cell. This Burkholderia multivorans (strain ATCC 17616 / 249) protein is UDP-3-O-acylglucosamine N-acyltransferase.